The chain runs to 500 residues: Probable 26S proteasome non-ATPase regulatory subunit 3 (500 aa).

Residues 253 to 432 form the PCI domain; the sequence is ARFLYYLGRI…GYMRTKESTD (180 aa). The tract at residues 462–484 is disordered; that stretch reads RYPPKSYGKELESAEERREREQQ. A compositionally biased stretch (basic and acidic residues) spans 468 to 484; that stretch reads YGKELESAEERREREQQ.

The protein belongs to the proteasome subunit S3 family. The 26S proteasome is composed of a core protease, known as the 20S proteasome, capped at one or both ends by the 19S regulatory complex (RC). The RC is composed of at least 18 different subunits in two subcomplexes, the base and the lid, which form the portions proximal and distal to the 20S proteolytic core, respectively.

In terms of biological role, acts as a regulatory subunit of the 26 proteasome which is involved in the ATP-dependent degradation of ubiquitinated proteins. The chain is Probable 26S proteasome non-ATPase regulatory subunit 3 (DOXA2) from Anopheles stephensi (Indo-Pakistan malaria mosquito).